We begin with the raw amino-acid sequence, 308 residues long: HPr kinase/phosphorylase (308 aa).

Residues His138 and Lys159 contribute to the active site. 153–160 (GESGLGKS) contributes to the ATP binding site. Ser160 is a binding site for Mg(2+). Asp177 functions as the Proton acceptor; for phosphorylation activity. Proton donor; for dephosphorylation activity in the catalytic mechanism. Positions 201–210 (LEVRGLGLLD) are important for the catalytic mechanism of both phosphorylation and dephosphorylation. Glu202 serves as a coordination point for Mg(2+). Residue Arg243 is part of the active site. The important for the catalytic mechanism of dephosphorylation stretch occupies residues 264-269 (QVAAGR).

This sequence belongs to the HPrK/P family. As to quaternary structure, homohexamer. It depends on Mg(2+) as a cofactor.

The catalysed reaction is [HPr protein]-L-serine + ATP = [HPr protein]-O-phospho-L-serine + ADP + H(+). It carries out the reaction [HPr protein]-O-phospho-L-serine + phosphate + H(+) = [HPr protein]-L-serine + diphosphate. Its function is as follows. Catalyzes the ATP- as well as the pyrophosphate-dependent phosphorylation of a specific serine residue in HPr, a phosphocarrier protein of the phosphoenolpyruvate-dependent sugar phosphotransferase system (PTS). HprK/P also catalyzes the pyrophosphate-producing, inorganic phosphate-dependent dephosphorylation (phosphorolysis) of seryl-phosphorylated HPr (P-Ser-HPr). This chain is HPr kinase/phosphorylase, found in Bordetella bronchiseptica (strain ATCC BAA-588 / NCTC 13252 / RB50) (Alcaligenes bronchisepticus).